The chain runs to 200 residues: MAQQRALPQSKETLLQSYNKRLKDDIKSIMDNFTEIIKTAKIEDETQVSRATQGEQDNYEMHVRAANIVRAGESLMKLVSDLKQFLILNDFPSVNEAIDQRNQQLRALQEECDRKLITLRDEVSIDLYELEEEYYSSSSSLCEANDLPLCEAYWRLDLDTDSADGLSAPLLASPETGAGPLQSAAPVHSHGGGPGPTEHT.

A coiled-coil region spans residues 93–122 (SVNEAIDQRNQQLRALQEECDRKLITLRDE). The disordered stretch occupies residues 167–200 (SAPLLASPETGAGPLQSAAPVHSHGGGPGPTEHT). Residues 190–200 (HGGGPGPTEHT) show a composition bias toward gly residues.

This sequence belongs to the Mediator complex subunit 22 family. As to quaternary structure, component of the Mediator complex, which is composed of MED1, MED4, MED6, MED7, MED8, MED9, MED10, MED11, MED12, MED13, MED13L, MED14, MED15, MED16, MED17, MED18, MED19, MED20, MED21, MED22, MED23, MED24, MED25, MED26, MED27, MED29, MED30, MED31, CCNC, CDK8 and CDC2L6/CDK11. The MED12, MED13, CCNC and CDK8 subunits form a distinct module termed the CDK8 module. Mediator containing the CDK8 module is less active than Mediator lacking this module in supporting transcriptional activation. Individual preparations of the Mediator complex lacking one or more distinct subunits have been variously termed ARC, CRSP, DRIP, PC2, SMCC and TRAP.

It localises to the nucleus. Component of the Mediator complex, a coactivator involved in the regulated transcription of nearly all RNA polymerase II-dependent genes. Mediator functions as a bridge to convey information from gene-specific regulatory proteins to the basal RNA polymerase II transcription machinery. Mediator is recruited to promoters by direct interactions with regulatory proteins and serves as a scaffold for the assembly of a functional preinitiation complex with RNA polymerase II and the general transcription factors. The polypeptide is Mediator of RNA polymerase II transcription subunit 22 (Med22) (Rattus norvegicus (Rat)).